A 215-amino-acid polypeptide reads, in one-letter code: Somatotropin (215 aa).

The N-terminal stretch at 1–25 is a signal peptide; it reads MAPGARISLLLLITFTLLGPQRSGA. A Zn(2+)-binding site is contributed by His-44. Cys-77 and Cys-188 are joined by a disulfide. Residue Ser-130 is modified to Phosphoserine. Residue Glu-197 coordinates Zn(2+). Residues Cys-205 and Cys-213 are joined by a disulfide bond.

Belongs to the somatotropin/prolactin family.

Its subcellular location is the secreted. In terms of biological role, plays an important role in growth control. Its major role in stimulating body growth is to stimulate the liver and other tissues to secrete IGF1. It stimulates both the differentiation and proliferation of myoblasts. It also stimulates amino acid uptake and protein synthesis in muscle and other tissues. In Trichosurus vulpecula (Brush-tailed possum), this protein is Somatotropin (GH1).